The chain runs to 275 residues: Formamidopyrimidine-DNA glycosylase (275 aa).

The active-site Schiff-base intermediate with DNA is the proline 2. The Proton donor role is filled by glutamate 3. Lysine 58 serves as the catalytic Proton donor; for beta-elimination activity. DNA contacts are provided by histidine 91, arginine 109, and arginine 154. The FPG-type zinc-finger motif lies at 240–274 (AVYERAGLPCRVCGAPIRRLVQGQRATYFCPSCQK). Catalysis depends on arginine 264, which acts as the Proton donor; for delta-elimination activity.

This sequence belongs to the FPG family. In terms of assembly, monomer. Requires Zn(2+) as cofactor.

It carries out the reaction Hydrolysis of DNA containing ring-opened 7-methylguanine residues, releasing 2,6-diamino-4-hydroxy-5-(N-methyl)formamidopyrimidine.. The enzyme catalyses 2'-deoxyribonucleotide-(2'-deoxyribose 5'-phosphate)-2'-deoxyribonucleotide-DNA = a 3'-end 2'-deoxyribonucleotide-(2,3-dehydro-2,3-deoxyribose 5'-phosphate)-DNA + a 5'-end 5'-phospho-2'-deoxyribonucleoside-DNA + H(+). Functionally, involved in base excision repair of DNA damaged by oxidation or by mutagenic agents. Acts as a DNA glycosylase that recognizes and removes damaged bases. Has a preference for oxidized purines, such as 7,8-dihydro-8-oxoguanine (8-oxoG). Has AP (apurinic/apyrimidinic) lyase activity and introduces nicks in the DNA strand. Cleaves the DNA backbone by beta-delta elimination to generate a single-strand break at the site of the removed base with both 3'- and 5'-phosphates. In Bordetella parapertussis (strain 12822 / ATCC BAA-587 / NCTC 13253), this protein is Formamidopyrimidine-DNA glycosylase.